Here is a 1031-residue protein sequence, read N- to C-terminus: Telomerase reverse transcriptase (1031 aa).

A Reverse transcriptase domain is found at 498-852 (KEVEEWKKSL…DYCDWIGISI (355 aa)). Mg(2+)-binding residues include D603, D781, and D782.

It belongs to the reverse transcriptase family. Telomerase subfamily. As to quaternary structure, component of the telomerase holoenzyme complex composed minimally of the catalytic subunit p123 and the telomerase RNA template component.

It localises to the nucleus. Its subcellular location is the chromosome. The protein localises to the telomere. It carries out the reaction DNA(n) + a 2'-deoxyribonucleoside 5'-triphosphate = DNA(n+1) + diphosphate. Telomerase is a ribonucleoprotein enzyme essential for the replication of chromosome termini in most eukaryotes. It elongates telomeres. It is a reverse transcriptase that adds simple sequence repeats to chromosome ends by copying a template sequence within the RNA component of the enzyme. The chain is Telomerase reverse transcriptase from Euplotes aediculatus (Ciliate).